The following is a 362-amino-acid chain: UDP-N-acetylglucosamine--N-acetylmuramyl-(pentapeptide) pyrophosphoryl-undecaprenol N-acetylglucosamine transferase (362 aa).

UDP-N-acetyl-alpha-D-glucosamine-binding positions include 15-17 (TGG), N127, R165, S191, I247, 266-271 (ALTVSE), and Q292.

Belongs to the glycosyltransferase 28 family. MurG subfamily.

The protein localises to the cell inner membrane. It catalyses the reaction di-trans,octa-cis-undecaprenyl diphospho-N-acetyl-alpha-D-muramoyl-L-alanyl-D-glutamyl-meso-2,6-diaminopimeloyl-D-alanyl-D-alanine + UDP-N-acetyl-alpha-D-glucosamine = di-trans,octa-cis-undecaprenyl diphospho-[N-acetyl-alpha-D-glucosaminyl-(1-&gt;4)]-N-acetyl-alpha-D-muramoyl-L-alanyl-D-glutamyl-meso-2,6-diaminopimeloyl-D-alanyl-D-alanine + UDP + H(+). The protein operates within cell wall biogenesis; peptidoglycan biosynthesis. Functionally, cell wall formation. Catalyzes the transfer of a GlcNAc subunit on undecaprenyl-pyrophosphoryl-MurNAc-pentapeptide (lipid intermediate I) to form undecaprenyl-pyrophosphoryl-MurNAc-(pentapeptide)GlcNAc (lipid intermediate II). This is UDP-N-acetylglucosamine--N-acetylmuramyl-(pentapeptide) pyrophosphoryl-undecaprenol N-acetylglucosamine transferase from Shewanella sp. (strain ANA-3).